Consider the following 216-residue polypeptide: Large ribosomal subunit protein uL1 (216 aa).

It belongs to the universal ribosomal protein uL1 family.

The sequence is that of Large ribosomal subunit protein uL1 from Oryza sativa subsp. indica (Rice).